A 157-amino-acid chain; its full sequence is Endoribonuclease YbeY (157 aa).

Zn(2+)-binding residues include His121, His125, and His131.

The protein belongs to the endoribonuclease YbeY family. It depends on Zn(2+) as a cofactor.

It is found in the cytoplasm. In terms of biological role, single strand-specific metallo-endoribonuclease involved in late-stage 70S ribosome quality control and in maturation of the 3' terminus of the 16S rRNA. The sequence is that of Endoribonuclease YbeY from Salinispora tropica (strain ATCC BAA-916 / DSM 44818 / JCM 13857 / NBRC 105044 / CNB-440).